Consider the following 116-residue polypeptide: Large ribosomal subunit protein uL24c (116 aa).

The protein belongs to the universal ribosomal protein uL24 family. Part of the 50S ribosomal subunit.

Its subcellular location is the plastid. The protein localises to the chloroplast. Its function is as follows. One of two assembly initiator proteins, it binds directly to the 5'-end of the 23S rRNA, where it nucleates assembly of the 50S subunit. This is Large ribosomal subunit protein uL24c (rpl24) from Pyropia yezoensis (Susabi-nori).